Reading from the N-terminus, the 505-residue chain is Maturase K (505 aa).

It belongs to the intron maturase 2 family. MatK subfamily.

It localises to the plastid. Its subcellular location is the chloroplast. In terms of biological role, usually encoded in the trnK tRNA gene intron. Probably assists in splicing its own and other chloroplast group II introns. The sequence is that of Maturase K from Rosa stellata (Star rose).